Here is a 1103-residue protein sequence, read N- to C-terminus: Ataxin-2 homolog (1103 aa).

The segment covering 1-10 (MSQSKDKKKF) has biased composition (basic residues). The disordered stretch occupies residues 1–75 (MSQSKDKKKF…QQQQQQQQPF (75 aa)). Gly residues predominate over residues 11 to 28 (VGGGGGGGGNNSGGGGYG). Low complexity-rich tracts occupy residues 33–44 (NNNNNNRNSSNN) and 56–73 (HHQQQQQQQQQQQQQQQQ). The region spanning 84 to 166 (RTVFMSMSLV…FLQITATGVV (83 aa)) is the Sm domain. Positions 258–287 (EFYKINQSVAEKKAQEIENEKSGNIHLLEE) form a coiled coil. Disordered stretches follow at residues 305-474 (VVRK…RESP), 516-557 (TNKS…APKS), 615-763 (LVIK…NNTT), 901-920 (HTMKPPGSLQPGGGGVVQPQ), and 930-1103 (QPQG…NQYH). Positions 312-356 (PTSTTSTTTSPPTQNPTPSSSVYIPPSKRNNNNNTPSTPSVTSPP) are enriched in low complexity. Over residues 358 to 371 (VDKKHQQTHQDKKQ) the composition is skewed to basic and acidic residues. A coiled-coil region spans residues 366-403 (HQDKKQTQQQQQQQQQQQQQQQQQQQQQQQQQQQQQTQ). A compositionally biased stretch (low complexity) spans 372–463 (TQQQQQQQQQ…NNTPTATNTN (92 aa)). Over residues 516-529 (TNKSMNKSGSNIST) the composition is skewed to polar residues. Low complexity-rich tracts occupy residues 530–544 (TPVNGSGNVGPNGTP), 637–676 (PTQLSLSGSSTSTNTSTTSPPTTNTTTTTTTATNSTTPST), and 683–694 (TTTPITTTILTE). Residues 691–730 (ILTENKSDDKEKEKEKEKEKVDEKEKEKEKEKSDEKDKDQ) are a coiled coil. Over residues 695-741 (NKSDDKEKEKEKEKEKVDEKEKEKEKEKSDEKDKDQSSTLVEKKDES) the composition is skewed to basic and acidic residues. The segment covering 742-763 (SSSSNTTTTTTNTTNNNNNNTT) has biased composition (low complexity). The segment covering 930 to 957 (QPQGGVVQPSAGGAPKTMYQQQQQQQQQ) has biased composition (low complexity). Positions 960–969 (QPGGPMGVQR) are enriched in gly residues. Over residues 974–984 (PPQQQPQQQQQ) the composition is skewed to low complexity. Over residues 1020-1031 (YAVPHPQYPMPP) the composition is skewed to pro residues. Over residues 1062 to 1076 (QVVSQNSPQQDSPSN) the composition is skewed to low complexity.

The protein belongs to the ataxin-2 family.

The chain is Ataxin-2 homolog (atxn2) from Dictyostelium discoideum (Social amoeba).